A 1031-amino-acid chain; its full sequence is Sister chromatid cohesion 1 protein 4 (1031 aa).

The disordered stretch occupies residues 461-481 (TPDKEDPGTCNDDAGNNNITG). The short motif at 545-552 (TKRLRSAP) is the Nuclear localization signal element. 3 disordered regions span residues 661 to 703 (VEEN…EELK), 742 to 772 (EKLD…ADPN), and 803 to 835 (ELPH…VGST). 2 stretches are compositionally biased toward basic and acidic residues: residues 742–762 (EKLD…HDGE) and 803–825 (ELPH…RDDQ).

Belongs to the rad21 family. Component of the cohesin complex. In terms of tissue distribution, expressed in tissues containing dividing cells such as seedlings, flower buds, flowers and inflorescence meristem tissue.

The protein resides in the nucleus. It localises to the chromosome. Its subcellular location is the centromere. Involved in sister chromatid and centromere cohesion during mitosis. The chain is Sister chromatid cohesion 1 protein 4 (SYN4) from Arabidopsis thaliana (Mouse-ear cress).